Consider the following 300-residue polypeptide: Zinc finger CCCH domain-containing protein 14 (300 aa).

The interval 1–38 (MEVGGRKRGKPDGANGAGGKRARESESFQTGVGSKSKP) is disordered. 2 consecutive C3H1-type zinc fingers follow at residues 33–61 (GSKS…HHFP) and 99–127 (TVKT…HGER). In terms of domain architecture, KH spans 170–234 (SATAKISVDA…DQIKNASAMV (65 aa)). The tract at residues 243 to 262 (GGAPPQGKKPVGGSHRGGGP) is disordered. The C3H1-type 3 zinc-finger motif lies at 265–292 (NFKTKLCENFTKGSCTFGDRCHFAHGEN).

The polypeptide is Zinc finger CCCH domain-containing protein 14 (Oryza sativa subsp. japonica (Rice)).